The sequence spans 294 residues: ATP synthase gamma chain (294 aa).

Belongs to the ATPase gamma chain family. As to quaternary structure, F-type ATPases have 2 components, CF(1) - the catalytic core - and CF(0) - the membrane proton channel. CF(1) has five subunits: alpha(3), beta(3), gamma(1), delta(1), epsilon(1). CF(0) has three main subunits: a, b and c.

It is found in the cell inner membrane. Produces ATP from ADP in the presence of a proton gradient across the membrane. The gamma chain is believed to be important in regulating ATPase activity and the flow of protons through the CF(0) complex. This Rhizorhabdus wittichii (strain DSM 6014 / CCUG 31198 / JCM 15750 / NBRC 105917 / EY 4224 / RW1) (Sphingomonas wittichii) protein is ATP synthase gamma chain.